The following is a 133-amino-acid chain: Phosphoribosyl-AMP cyclohydrolase (133 aa).

Position 77 (Asp-77) interacts with Mg(2+). A Zn(2+)-binding site is contributed by Cys-78. Positions 79 and 81 each coordinate Mg(2+). Residues Cys-95 and Cys-102 each contribute to the Zn(2+) site.

It belongs to the PRA-CH family. Homodimer. The cofactor is Mg(2+). Zn(2+) is required as a cofactor.

Its subcellular location is the cytoplasm. It catalyses the reaction 1-(5-phospho-beta-D-ribosyl)-5'-AMP + H2O = 1-(5-phospho-beta-D-ribosyl)-5-[(5-phospho-beta-D-ribosylamino)methylideneamino]imidazole-4-carboxamide. The protein operates within amino-acid biosynthesis; L-histidine biosynthesis; L-histidine from 5-phospho-alpha-D-ribose 1-diphosphate: step 3/9. In terms of biological role, catalyzes the hydrolysis of the adenine ring of phosphoribosyl-AMP. The protein is Phosphoribosyl-AMP cyclohydrolase of Pseudomonas fluorescens (strain Pf0-1).